The sequence spans 224 residues: Ribosome maturation factor RimM (224 aa).

Residues Met1 to Pro12 are compositionally biased toward low complexity. Disordered stretches follow at residues Met1–Val46 and Val204–Gly224. Residues Glu137–Leu211 form the PRC barrel domain.

It belongs to the RimM family. As to quaternary structure, binds ribosomal protein uS19.

It is found in the cytoplasm. Functionally, an accessory protein needed during the final step in the assembly of 30S ribosomal subunit, possibly for assembly of the head region. Essential for efficient processing of 16S rRNA. May be needed both before and after RbfA during the maturation of 16S rRNA. It has affinity for free ribosomal 30S subunits but not for 70S ribosomes. In Methylorubrum populi (strain ATCC BAA-705 / NCIMB 13946 / BJ001) (Methylobacterium populi), this protein is Ribosome maturation factor RimM.